Consider the following 269-residue polypeptide: Chymotrypsin-like elastase family member 2B (269 aa).

A signal peptide spans 1–16 (MIRTLLLSTLVAGALS). The propeptide at 17–28 (CGVSTYAPDMSR) is activation peptide. One can recognise a Peptidase S1 domain in the interval 29–267 (MLGGEEARPN…YNDWINSVIA (239 aa)). Cysteines 58 and 74 form a disulfide. Catalysis depends on charge relay system residues His-73 and Asp-121. Intrachain disulfides connect Cys-155/Cys-222, Cys-186/Cys-202, and Cys-212/Cys-243. The Charge relay system role is filled by Ser-216.

It belongs to the peptidase S1 family. Elastase subfamily. In terms of tissue distribution, pancreas.

It localises to the secreted. The enzyme catalyses Preferential cleavage: Leu-|-Xaa, Met-|-Xaa and Phe-|-Xaa. Hydrolyzes elastin.. Its function is as follows. Acts upon elastin. The polypeptide is Chymotrypsin-like elastase family member 2B (CELA2B) (Homo sapiens (Human)).